The chain runs to 459 residues: Exodeoxyribonuclease 7 large subunit (459 aa).

It belongs to the XseA family. In terms of assembly, heterooligomer composed of large and small subunits.

It is found in the cytoplasm. It catalyses the reaction Exonucleolytic cleavage in either 5'- to 3'- or 3'- to 5'-direction to yield nucleoside 5'-phosphates.. Bidirectionally degrades single-stranded DNA into large acid-insoluble oligonucleotides, which are then degraded further into small acid-soluble oligonucleotides. This Pseudomonas fluorescens (strain ATCC BAA-477 / NRRL B-23932 / Pf-5) protein is Exodeoxyribonuclease 7 large subunit.